The primary structure comprises 946 residues: Bifunctional lysine-specific demethylase and histidyl-hydroxylase NO66 (946 aa).

Positions 14 to 435 (YRGSATSKNY…TSAASKKNTV (422 aa)) are disordered. Composition is skewed to polar residues over residues 17–28 (SATSKNYVQKGT) and 37–46 (AKNNNRNLAS). Low complexity predominate over residues 59–73 (SGSYSDGDNGSSSSS). The span at 99–110 (TLNNHSSQSSPE) shows a compositional bias: polar residues. The span at 117–128 (ESLKRRNDEAEG) shows a compositional bias: basic and acidic residues. A compositionally biased stretch (polar residues) spans 169-186 (TLNSHSSQSSPETPANTR). The segment covering 187 to 198 (ESLKRRTDEAEG) has biased composition (basic and acidic residues). The segment covering 239 to 256 (TLNSHSYQSSPETPANTR) has biased composition (polar residues). Over residues 257-268 (ESLKRRTDEAEG) the composition is skewed to basic and acidic residues. Thr-309 carries the post-translational modification Phosphothreonine. Positions 309 to 327 (TLNSHSSQSSPETPANTRE) are enriched in polar residues. Residues 328–338 (SLNRRNYEAEG) are compositionally biased toward basic and acidic residues. Residue Ser-339 is modified to Phosphoserine. Polar residues predominate over residues 379 to 397 (TLNSHSSQSSPETPANTRE). Over residues 398–408 (SLNRRNYEAEG) the composition is skewed to basic and acidic residues. The segment covering 416-433 (RTSSTPVGQSTSAASKKN) has biased composition (polar residues). The 137-residue stretch at 606–742 (NPSSYLVQLR…NLMEKLMPLV (137 aa)) folds into the JmjC domain. Fe cation contacts are provided by His-646, Asp-648, and His-708.

This sequence belongs to the ROX family. NO66 subfamily. Requires Fe(2+) as cofactor.

Its subcellular location is the nucleus. The catalysed reaction is N(6),N(6)-dimethyl-L-lysyl(36)-[histone H3] + 2 2-oxoglutarate + 2 O2 = L-lysyl(36)-[histone H3] + 2 formaldehyde + 2 succinate + 2 CO2. Its function is as follows. Oxygenase that can act as both a histone lysine demethylase and a ribosomal histidine hydroxylase. Specifically demethylates 'Lys-4' (H3K4me) and 'Lys-36' (H3K36me) of histone H3, thereby playing a central role in histone code. This chain is Bifunctional lysine-specific demethylase and histidyl-hydroxylase NO66, found in Drosophila pseudoobscura pseudoobscura (Fruit fly).